The primary structure comprises 490 residues: Glutamate--tRNA ligase (490 aa).

Positions 10–20 match the 'HIGH' region motif; it reads PSPTGRMHVGN. Residues Cys109, Cys111, Cys140, and His142 each coordinate Zn(2+). Residues 257 to 261 carry the 'KMSKS' region motif; that stretch reads KLSKR. Lys260 is a binding site for ATP.

This sequence belongs to the class-I aminoacyl-tRNA synthetase family. Glutamate--tRNA ligase type 1 subfamily. In terms of assembly, monomer. It depends on Zn(2+) as a cofactor.

The protein resides in the cytoplasm. The catalysed reaction is tRNA(Glu) + L-glutamate + ATP = L-glutamyl-tRNA(Glu) + AMP + diphosphate. Its function is as follows. Catalyzes the attachment of glutamate to tRNA(Glu) in a two-step reaction: glutamate is first activated by ATP to form Glu-AMP and then transferred to the acceptor end of tRNA(Glu). The polypeptide is Glutamate--tRNA ligase (Lachnoclostridium phytofermentans (strain ATCC 700394 / DSM 18823 / ISDg) (Clostridium phytofermentans)).